The sequence spans 52 residues: Large ribosomal subunit protein bL33 (52 aa).

The protein belongs to the bacterial ribosomal protein bL33 family.

This Chlamydia abortus (strain DSM 27085 / S26/3) (Chlamydophila abortus) protein is Large ribosomal subunit protein bL33.